Reading from the N-terminus, the 318-residue chain is Molybdenum cofactor insertion chaperone PaoD (318 aa).

Homodimer in solution. Interacts with MocA.

Functionally, chaperone required for the production of an active PaoABC aldehyde oxidoreductase. Stabilizes the PaoC subunit and is required for the insertion of the molybdenum cofactor into this subunit. Binds molybdenum cofactor. Binds the molybdopterin cytosine dinucleotide (MCD) form of the cofactor after its formation by the molybdenum cofactor cytidylyltransferase MocA. This chain is Molybdenum cofactor insertion chaperone PaoD, found in Escherichia coli (strain K12).